The chain runs to 379 residues: UDP-4-amino-4-deoxy-L-arabinose--oxoglutarate aminotransferase (379 aa).

Lys182 bears the N6-(pyridoxal phosphate)lysine mark.

The protein belongs to the DegT/DnrJ/EryC1 family. ArnB subfamily. Homodimer. Requires pyridoxal 5'-phosphate as cofactor.

It carries out the reaction UDP-4-amino-4-deoxy-beta-L-arabinose + 2-oxoglutarate = UDP-beta-L-threo-pentopyranos-4-ulose + L-glutamate. The protein operates within nucleotide-sugar biosynthesis; UDP-4-deoxy-4-formamido-beta-L-arabinose biosynthesis; UDP-4-deoxy-4-formamido-beta-L-arabinose from UDP-alpha-D-glucuronate: step 2/3. It functions in the pathway bacterial outer membrane biogenesis; lipopolysaccharide biosynthesis. Functionally, catalyzes the conversion of UDP-4-keto-arabinose (UDP-Ara4O) to UDP-4-amino-4-deoxy-L-arabinose (UDP-L-Ara4N). The modified arabinose is attached to lipid A and is required for resistance to polymyxin and cationic antimicrobial peptides. The sequence is that of UDP-4-amino-4-deoxy-L-arabinose--oxoglutarate aminotransferase from Shigella sonnei (strain Ss046).